A 251-amino-acid polypeptide reads, in one-letter code: 5'-nucleotidase SurE (251 aa).

A divalent metal cation contacts are provided by Asp8, Asp9, Ser40, and Asn95.

The protein belongs to the SurE nucleotidase family. Requires a divalent metal cation as cofactor.

The protein resides in the cytoplasm. It catalyses the reaction a ribonucleoside 5'-phosphate + H2O = a ribonucleoside + phosphate. Functionally, nucleotidase that shows phosphatase activity on nucleoside 5'-monophosphates. This is 5'-nucleotidase SurE from Maridesulfovibrio salexigens (strain ATCC 14822 / DSM 2638 / NCIMB 8403 / VKM B-1763) (Desulfovibrio salexigens).